Reading from the N-terminus, the 402-residue chain is Arginine deiminase (402 aa).

C391 (amidino-cysteine intermediate) is an active-site residue.

This sequence belongs to the arginine deiminase family.

The protein localises to the cytoplasm. The enzyme catalyses L-arginine + H2O = L-citrulline + NH4(+). Its pathway is amino-acid degradation; L-arginine degradation via ADI pathway; carbamoyl phosphate from L-arginine: step 1/2. In Mycobacterium marinum (strain ATCC BAA-535 / M), this protein is Arginine deiminase.